Consider the following 690-residue polypeptide: Eukaryotic translation initiation factor 3 subunit B (690 aa).

The segment covering 1–11 (MAKKKSEEHSG) has biased composition (basic and acidic residues). Residues 1–33 (MAKKKSEEHSGTDANDSDYQEEPNFDDPPGFVD) are disordered. The span at 15-25 (NDSDYQEEPNF) shows a compositional bias: acidic residues. The RRM domain maps to 57–141 (SVVVVDNIPK…HTFAVNLFTD (85 aa)). WD repeat units lie at residues 207-246 (TRER…KIQK), 293-331 (DGMS…LLDL), 334-369 (IKIP…TLME), 442-484 (EIRE…KPSL), and 530-575 (PDHF…IKRT). Positions 595 to 645 (EEKQKEIKKNLKKYYAAFEQKDRLRLTRASKELLEKRSQLRETFMEYRNKR) form a coiled coil.

It belongs to the eIF-3 subunit B family. As to quaternary structure, component of the eukaryotic translation initiation factor 3 (eIF-3) complex. The eIF-3 complex interacts with pix. Interacts with mxt.

Its subcellular location is the cytoplasm. Its function is as follows. RNA-binding component of the eukaryotic translation initiation factor 3 (eIF-3) complex, which is involved in protein synthesis of a specialized repertoire of mRNAs and, together with other initiation factors, stimulates binding of mRNA and methionyl-tRNAi to the 40S ribosome. The eIF-3 complex specifically targets and initiates translation of a subset of mRNAs involved in cell proliferation. In Drosophila melanogaster (Fruit fly), this protein is Eukaryotic translation initiation factor 3 subunit B.